A 439-amino-acid chain; its full sequence is Dihydroorotase (439 aa).

Zn(2+)-binding residues include H73 and H75. Substrate contacts are provided by residues 75–77 (HLR) and N107. 3 residues coordinate Zn(2+): D165, H192, and H245. N291 contributes to the substrate binding site. D318 lines the Zn(2+) pocket. D318 is an active-site residue. Position 322 (H322) interacts with substrate.

The protein belongs to the metallo-dependent hydrolases superfamily. DHOase family. Class I DHOase subfamily. Requires Zn(2+) as cofactor.

It catalyses the reaction (S)-dihydroorotate + H2O = N-carbamoyl-L-aspartate + H(+). Its pathway is pyrimidine metabolism; UMP biosynthesis via de novo pathway; (S)-dihydroorotate from bicarbonate: step 3/3. Catalyzes the reversible cyclization of carbamoyl aspartate to dihydroorotate. This is Dihydroorotase from Syntrophobacter fumaroxidans (strain DSM 10017 / MPOB).